The following is a 20-amino-acid chain: Cupiennin-6f (20 aa).

In terms of tissue distribution, expressed by the venom gland.

It localises to the secreted. In Cupiennius salei (American wandering spider), this protein is Cupiennin-6f.